The following is a 490-amino-acid chain: 5'-3' exonuclease PLD3 (490 aa).

Residues 1 to 38 lie on the Cytoplasmic side of the membrane; that stretch reads MKPKLMYQELKVPAEEPASELPMNEIEAWKAAEKKARW. Residues 39–59 traverse the membrane as a helical; Signal-anchor for type II membrane protein segment; that stretch reads VLLVLILAVVGFGALMTQLFL. Residues 60 to 490 lie on the Lumenal side of the membrane; that stretch reads WEYGDLHLFG…DSVGNACRLL (431 aa). 2 disulfide bridges follow: cysteine 77–cysteine 239 and cysteine 81–cysteine 237. 2 N-linked (GlcNAc...) asparagine glycosylation sites follow: asparagine 97 and asparagine 132. The region spanning 196–223 is the PLD phosphodiesterase 1 domain; the sequence is THGVLHTKFWVVDQTHFYLGSANMDWRS. Residues histidine 201, lysine 203, and aspartate 208 contribute to the active site. The active-site Proton donor is histidine 201. Histidine 201 and lysine 203 together coordinate phosphate. Asparagine 218 contributes to the phosphate binding site. N-linked (GlcNAc...) asparagine glycans are attached at residues asparagine 236, asparagine 284, and asparagine 387. Cysteine 366 and cysteine 487 are disulfide-bonded. The 27-residue stretch at 411–437 folds into the PLD phosphodiesterase 2 domain; the sequence is YARVNHNKYMVTERATYIGTSNWSGSY. Residue histidine 416 participates in phosphate binding. Histidine 416 (nucleophile) is an active-site residue. Phenylalanine 438 serves as a coordination point for Mg(2+).

Belongs to the phospholipase D family. Homodimer. Interacts with APP. In terms of processing, N-glycosylated. Post-translationally, proteolytically processed to a soluble form that is stable within endosomes and lysosomes. During transport through the secretory pathway becomes proteolysed by cysteine proteases, thereby releasing a stable soluble lysosomal lumenal polypeptide, whereas the transmembrane-bound fragment is rapidly degraded. Its transport route to lysosomes involves ubiquitination and the ESCRT complex. Ubiquitinated. Ubiquitination mediates sorting into lysosomes.

It localises to the endoplasmic reticulum membrane. It is found in the lysosome lumen. The protein localises to the early endosome membrane. The protein resides in the late endosome membrane. Its subcellular location is the golgi apparatus membrane. It localises to the endosome membrane. It catalyses the reaction Exonucleolytic cleavage in the 5'- to 3'-direction to yield nucleoside 3'-phosphates.. The enzyme catalyses a 5'-end 5'-dephospho-ribonucleotidyl-ribonucleotide-RNA + H2O = a ribonucleoside 3'-phosphate + a 5'-end dephospho-ribonucleoside-RNA + H(+). The catalysed reaction is a ribonucleoside 3'-phosphate-2'-3'-cyclophospho-GMP + H2O = a ribonucleoside 3'-phosphate + 2',3'-cyclophospho-GMP + H(+). It carries out the reaction a 5'-end 5'-dephospho-2'-deoxyribonucleotidyl-2'-deoxyribonucleotide in single-stranded DNA + H2O = a 5'-end dephospho-2'-deoxyribonucleoside in single-stranded DNA + a 2'-deoxyribonucleoside 3'-phosphate + H(+). It catalyses the reaction a 5'-end 5'-phospho-2'-deoxyribonucleotide in single-stranded DNA + H2O = a 5'-end 5'-dephospho-2'-deoxyribonucleotide in single-stranded DNA + phosphate. The enzyme catalyses a 3-lyso-sn-glycero-1-phospho-(3'-acyl-1'-sn-glycerol) + a 1-acyl-sn-glycerol = a 3-acyl-sn-glycero-1-phospho-(3'-acyl-1'-sn-glycerol) + glycerol. The catalysed reaction is 3-lyso-sn-glycero-1-phospho-(3'-(9Z-octadecenoyl)-1'-sn-glycerol) + 1-(9Z-octadecenoyl)-sn-glycerol = 3-(9Z-octadecenoyl)-sn-glycero-1-phospho-(3'-(9Z-octadecenoyl)-1'-sn-glycerol) + glycerol. Functionally, 5'-&gt;3' exonuclease that hydrolyzes the phosphodiester bond of single-stranded DNA (ssDNA) and RNA molecules to form nucleoside 3'-monophosphates and 5'-end 5'-hydroxy deoxyribonucleotide/ribonucleotide fragments. Partially redundant with PLD4, can cleave all four nucleotides displaying higher efficiency for ssDNA and RNA fragments initiated with uridine and guanosine residues and lower efficiency for cytidine-initiated substrates. As a result, it does not always degrade polynucleotides to the single nucleotide level, it can stall at specific sites sparing certain fragments from exonucleolytic degradation. Processes self and pathogenic ssDNA and RNA molecules that reach the endolysosomal compartment via phagocytosis or autophagy and may serve as 'danger' signals for recognition by innate immune receptors such as toll-like receptors (TLRs). Degrades mitochondrial CpG-rich ssDNA fragments to prevent TLR9 activation and autoinflammatory response, but it can cleave viral RNA to generate ligands for TLR7 activation and initiate antiviral immune responses. In plasmacytoid dendritic cells, it cooperates with endonuclease RNASET2 to release 2',3'-cyclic guanosine monophosphate (2',3'-cGMP), a potent stimulatory ligand for TLR7. Produces 2',3'-cGMPs and cytidine-rich RNA fragments that occupy TLR7 ligand-binding pockets and trigger a signaling-competent state. Can exert polynucleotide phosphatase activity toward 5'-phosphorylated ssDNA substrates although at a slow rate. Transphosphatidylase that catalyzes the exchange with R to S stereo-inversion of the glycerol moiety between (S,R)-lysophosphatidylglycerol (LPG) and monoacylglycerol (MAG) substrates to yield (S,S)-bis(monoacylglycero)phosphate (BMP). Can synthesize a variety of (S,S)-BMPs representing the main phospholipid constituent of lysosomal intralumenal vesicle (ILV) membranes that bind acid hydrolases for lipid degradation. Regulates the homeostasis and interorganellar communication of the endolysosomal system with an overall impact on cellular removal of dysfunctional organelles via autophagy as well as proper protein and lipid turnover. May play a role in myotube formation in response to ER stress. The protein is 5'-3' exonuclease PLD3 (PLD3) of Bos taurus (Bovine).